Reading from the N-terminus, the 40-residue chain is Sulfur globule protein TR0 (40 aa).

The protein to C.vinosum CV1 and CV2. The protein envelope of the sulfur globules is composed of the three different proteins TR0, TR1 and TR2.

Structural protein of the sulfur globules, which are intracellular globules that serve for sulfur storage in purple sulfur bacteria. This chain is Sulfur globule protein TR0, found in Thiocapsa roseopersicina.